The chain runs to 1244 residues: ATP-dependent RNA helicase DHX8 (1244 aa).

A Glycyl lysine isopeptide (Lys-Gly) (interchain with G-Cter in SUMO2) cross-link involves residue K140. 2 disordered regions span residues 152-289 (LMPS…PAIG) and 361-396 (DVDQ…RPTH). Basic and acidic residues predominate over residues 160 to 169 (EKQRDPEHRD). The segment covering 170-179 (RTKKKKRSRS) has biased composition (basic residues). Residues 180–220 (RDRDRDRDRDRDRDRDRDRDRDKDRERDRDRERDRERDRER) show a composition bias toward basic and acidic residues. Residues 221–234 (DHKRRHRSRSRSHS) show a composition bias toward basic residues. The segment covering 256-283 (FKDRKDREKYGERNLDRWRDKHVDRPPP) has biased composition (basic and acidic residues). An S1 motif domain is found at 289 to 360 (GDIYNGKVTS…TGTKTSLSMK (72 aa)). Over residues 386–395 (TSMRNPDRPT) the composition is skewed to basic and acidic residues. At S419 the chain carries Phosphoserine. A Glycyl lysine isopeptide (Lys-Gly) (interchain with G-Cter in SUMO2) cross-link involves residue K423. A Phosphoserine modification is found at S484. Residues 599-762 (VQAVHDNQIL…FYEAPIFTIP (164 aa)) enclose the Helicase ATP-binding domain. 612 to 619 (GETGSGKT) contacts ATP. Residues 709–712 (DEAH) carry the DEAH box motif. A Helicase C-terminal domain is found at 780–960 (YLDASLITVM…STVLSLKAMG (181 aa)).

It belongs to the DEAD box helicase family. DEAH subfamily. DDX8/PRP22 sub-subfamily. In terms of assembly, identified in the spliceosome C complex. Interacts with ARRB2; the interaction is detected in the nucleus upon OR1D2 stimulation. Interacts with SRRM2. Interacts with CACTIN.

Its subcellular location is the nucleus. It catalyses the reaction ATP + H2O = ADP + phosphate + H(+). Functionally, involved in pre-mRNA splicing as component of the spliceosome. Facilitates nuclear export of spliced mRNA by releasing the RNA from the spliceosome. The polypeptide is ATP-dependent RNA helicase DHX8 (Dhx8) (Mus musculus (Mouse)).